We begin with the raw amino-acid sequence, 163 residues long: MQSVDSMLGTVGGCGGGEAASTFSKDPSGCCVGNDCRDGGRGLERRHGRWSRGEGGESGLCSGGQMASEIEYWDGLAISVMEVEKAFGSTNVLWKTEPFSLWACTAACPPSLSPTLLALGLPRDGKELAEQGSLWTVLEPGGDWSHSQSQLGTPGRGKGALGF.

The interval 144–163 is disordered; that stretch reads WSHSQSQLGTPGRGKGALGF. A compositionally biased stretch (gly residues) spans 154-163; it reads PGRGKGALGF.

This is an uncharacterized protein from Homo sapiens (Human).